The chain runs to 376 residues: Sulfate/thiosulfate import ATP-binding protein CysA (376 aa).

The 235-residue stretch at 3–237 (IRLDNISKHF…PNSRFVFDFF (235 aa)) folds into the ABC transporter domain. 35 to 42 (GPSGSGKT) lines the ATP pocket.

This sequence belongs to the ABC transporter superfamily. Sulfate/tungstate importer (TC 3.A.1.6) family. The complex is composed of two ATP-binding proteins (CysA), two transmembrane proteins (CysT and CysW) and a solute-binding protein (CysP).

The protein localises to the cell inner membrane. It carries out the reaction sulfate(out) + ATP + H2O = sulfate(in) + ADP + phosphate + H(+). It catalyses the reaction thiosulfate(out) + ATP + H2O = thiosulfate(in) + ADP + phosphate + H(+). Part of the ABC transporter complex CysAWTP involved in sulfate/thiosulfate import. Responsible for energy coupling to the transport system. This is Sulfate/thiosulfate import ATP-binding protein CysA from Vibrio cholerae serotype O1 (strain ATCC 39315 / El Tor Inaba N16961).